A 578-amino-acid polypeptide reads, in one-letter code: Rhamnogalacturonate lyase (578 aa).

A signal peptide spans 1–27 (MHMNKPLQAWRTPLLTLIFVLPLTATG).

This sequence belongs to the polysaccharide lyase 4 family.

It localises to the secreted. It carries out the reaction Endotype eliminative cleavage of L-alpha-rhamnopyranosyl-(1-&gt;4)-alpha-D-galactopyranosyluronic acid bonds of rhamnogalacturonan I domains in ramified hairy regions of pectin leaving L-rhamnopyranose at the reducing end and 4-deoxy-4,5-unsaturated D-galactopyranosyluronic acid at the non-reducing end.. Its function is as follows. Degrades the rhamnogalacturonan I (RG-I) backbone of pectin. Is required for the full virulence of E.chrysanthemi strain 3937 as it is involved in rotting of plant tissue. The sequence is that of Rhamnogalacturonate lyase (rhiE) from Dickeya dadantii (strain 3937) (Erwinia chrysanthemi (strain 3937)).